Here is a 362-residue protein sequence, read N- to C-terminus: Quinolone epoxide rearrangement protein penF (362 aa).

H220 is a catalytic residue. E222 functions as the Broensted acid in the catalytic mechanism.

Belongs to the quinolone epoxide rearrangement protein penF family.

It carries out the reaction [(1'E)-5'-(3',3'-dimethyloxiran-2'-yl)-3'-hydroxy-3'-methylpent-1'-en-1'-yl]-quinolinone B = yaequinolone D. It functions in the pathway secondary metabolite biosynthesis. Its pathway is alkaloid biosynthesis. It participates in mycotoxin biosynthesis. Its function is as follows. Quinolone epoxide rearrangement protein; part of the gene cluster that mediates the biosynthesis of penigequinolones, potent insecticidal alkaloids that contain a highly modified 10-carbon prenyl group. The first stage is catalyzed by the nonribosomal peptide synthetase penN that condenses anthranilic acid and O-methyl-L-tyrosine to produce 4'-methoxycyclopeptin. 4'-methoxycyclopeptin is then converted to 4'-methoxydehydrocyclopeptin by the ketoglutarate-dependent dioxygenase penM through dehydrogenation to form a double bond between C-alpha and C-beta of the O-methyltyrosine side chain. PenM also converts its first product methoxydehydrocyclopeptin to 4'-methoxycyclopenin. The following conversion of 4'methoxycyclopenin into 4'-methoxyviridicatin is catalyzed by the cyclopenase penL. 4'-methoxyviridicatin is the precursor of quinolone natural products, and is further converted to quinolinone B. The prenyltransferase penI then catalyzes the canonical Friedel-Crafts alkylation of quinolinone B with dimethylallyl cation to yield dimethylallyl quinolone, which is subjected to FAD-dependent dehydrogenation by the FAD-linked oxidoreductase penH to yield conjugated aryl diene. The delta(3') double bond then serves as the site of the second alkylation with DMAPP catalyzed by the prenyltransferase penG to yield a carbenium ion intermediate, which can be attacked by H(2)O to yield a styrenyl quinolone containing a C3'-hydroxyprenyl chain, or undergo cyclization to yield yaequinolones J1 and J2. The conversion of the styrenyl quinolone into the tetrahydrofuran-containing yaequinolone C is performed by the FAD-dependent monooxygenase penE and involves epoxidation of the terminal C7'-C8' olefin, followed by epoxide ring opening initiated by the C3' hydroxyl group. The predicted cysteine hydrolase penJ acts as an epoxide hydrolase that enhances the rate of the 5-exo-tet cyclization step, increasing the yield of yaequinolone C. PenF catalyzes the cationic rearrangement of the epoxide formed by penE (before ring opening to produce yaequinolone C) into yaequinolone D. Finally, the short-chain dehydrogenase/reductase (SDR)-like reductase penD, catalyzes both the dehydration of yaequinolone D and the reduction of the resulting oxonium to yield penigequinolone. In Penicillium thymicola, this protein is Quinolone epoxide rearrangement protein penF.